We begin with the raw amino-acid sequence, 415 residues long: Gamma-glutamyl phosphate reductase (415 aa).

This sequence belongs to the gamma-glutamyl phosphate reductase family.

The protein resides in the cytoplasm. The catalysed reaction is L-glutamate 5-semialdehyde + phosphate + NADP(+) = L-glutamyl 5-phosphate + NADPH + H(+). Its pathway is amino-acid biosynthesis; L-proline biosynthesis; L-glutamate 5-semialdehyde from L-glutamate: step 2/2. In terms of biological role, catalyzes the NADPH-dependent reduction of L-glutamate 5-phosphate into L-glutamate 5-semialdehyde and phosphate. The product spontaneously undergoes cyclization to form 1-pyrroline-5-carboxylate. The protein is Gamma-glutamyl phosphate reductase of Bacillus subtilis (strain 168).